We begin with the raw amino-acid sequence, 371 residues long: tRNA-specific 2-thiouridylase MnmA (371 aa).

ATP contacts are provided by residues 14–21 and M40; that span reads GMSGGVDS. Residues 100-102 form an interaction with target base in tRNA region; the sequence is NPD. C105 functions as the Nucleophile in the catalytic mechanism. A disulfide bond links C105 and C201. G129 lines the ATP pocket. Residues 151–153 form an interaction with tRNA region; that stretch reads KDQ. Residue C201 is the Cysteine persulfide intermediate of the active site. Residues 309-310 are interaction with tRNA; that stretch reads RY.

It belongs to the MnmA/TRMU family.

It is found in the cytoplasm. The enzyme catalyses S-sulfanyl-L-cysteinyl-[protein] + uridine(34) in tRNA + AH2 + ATP = 2-thiouridine(34) in tRNA + L-cysteinyl-[protein] + A + AMP + diphosphate + H(+). Its function is as follows. Catalyzes the 2-thiolation of uridine at the wobble position (U34) of tRNA, leading to the formation of s(2)U34. The sequence is that of tRNA-specific 2-thiouridylase MnmA from Halalkalibacterium halodurans (strain ATCC BAA-125 / DSM 18197 / FERM 7344 / JCM 9153 / C-125) (Bacillus halodurans).